We begin with the raw amino-acid sequence, 159 residues long: Aspartate carbamoyltransferase regulatory chain (159 aa).

The Zn(2+) site is built by Cys113, Cys118, Cys143, and Cys146.

Belongs to the PyrI family. As to quaternary structure, contains catalytic and regulatory chains. Zn(2+) is required as a cofactor.

In terms of biological role, involved in allosteric regulation of aspartate carbamoyltransferase. This Methanococcoides burtonii (strain DSM 6242 / NBRC 107633 / OCM 468 / ACE-M) protein is Aspartate carbamoyltransferase regulatory chain.